We begin with the raw amino-acid sequence, 451 residues long: Probable multidrug resistance protein NorM (451 aa).

Helical transmembrane passes span 23-43 (GPVV…TAVI), 53-73 (AAAY…GVML), 101-121 (LALL…FVLP), 132-152 (LVAA…AFIA), 169-189 (VALT…FGWG), 194-214 (LGLA…AALL), 243-263 (WPIG…TLLM), 277-297 (TMQT…ATGV), 316-336 (LVGL…ELAA), 355-375 (LIAA…MDGL), 391-411 (VPLL…GSVL), and 422-442 (LWFG…GRFL).

This sequence belongs to the multi antimicrobial extrusion (MATE) (TC 2.A.66.1) family.

It is found in the cell membrane. In terms of biological role, multidrug efflux pump. The sequence is that of Probable multidrug resistance protein NorM (norM) from Deinococcus radiodurans (strain ATCC 13939 / DSM 20539 / JCM 16871 / CCUG 27074 / LMG 4051 / NBRC 15346 / NCIMB 9279 / VKM B-1422 / R1).